The following is a 181-amino-acid chain: Malignant T-cell-amplified sequence 1 (181 aa).

Thr81 bears the Phosphothreonine; by MAPK1 and MAPK3 mark. Residues 92–171 (LPHQQVDKGA…IGIENIHYLN (80 aa)) enclose the PUA domain. Ser118 is subject to Phosphoserine; by CDK1.

The protein belongs to the MCTS1 family. As to quaternary structure, interacts (via PUA domain) with DENR; the complex regulates translation reinitiation. In terms of processing, phosphorylation is critical for stabilization and promotion of cell proliferation. As to expression, ubiquitous. Over-expressed in T-cell lymphoid cell lines and in non-Hodgkin lymphoma cell lines as well as in a subset of primary large B-cell lymphomas.

Its subcellular location is the cytoplasm. Functionally, translation regulator forming a complex with DENR to promote translation reinitiation. Translation reinitiation is the process where the small ribosomal subunit remains attached to the mRNA following termination of translation of a regulatory upstream ORF (uORF), and resume scanning on the same mRNA molecule to initiate translation of a downstream ORF, usually the main ORF (mORF). The MCTS1/DENR complex is pivotal to two linked mechanisms essential for translation reinitiation. Firstly, the dissociation of deacylated tRNAs from post-termination 40S ribosomal complexes during ribosome recycling. Secondly, the recruitment in an EIF2-independent manner of aminoacylated initiator tRNA to P site of 40S ribosomes for a new round of translation. This regulatory mechanism governs the translation of more than 150 genes which translation reinitiation is MCTS1/DENR complex-dependent. Consequently, modulates various unrelated biological processes including cell cycle regulation and DNA damage signaling and repair. Notably, it positively regulates interferon gamma immunity to mycobacteria by enhancing the translation of JAK2. The polypeptide is Malignant T-cell-amplified sequence 1 (MCTS1) (Homo sapiens (Human)).